Consider the following 729-residue polypeptide: Oligopeptide transporter 4 (729 aa).

Ala2 carries the N-acetylalanine modification. Position 8 is a phosphoserine (Ser8). The next 16 helical transmembrane spans lie at 37–57 (MWFL…FFSY), 61–81 (PLVI…HFLA), 123–143 (AFGS…AFYG), 148–168 (FIAG…WAGL), 177–194 (AHMW…FRAL), 207–227 (FFVI…YLFT), 256–276 (GLGA…SPLI), 279–299 (FFAI…VLPL), 352–372 (LSMF…STLT), 410–430 (WWFY…CVFL), 438–458 (WWGL…ISII), 522–542 (FLVQ…VAWW), 592–612 (YAAM…VWSL), 621–637 (WIPL…TAMM), 640–660 (ATAV…LFVF), and 673–693 (VLSA…YFSV).

Belongs to the oligopeptide OPT transporter (TC 2.A.67.1) family. Expressed in flowers, leaves, roots, and stems.

Its subcellular location is the membrane. Its function is as follows. Involved in the translocation of tetra- and pentapeptides across the cellular membrane in an energy-dependent manner. The chain is Oligopeptide transporter 4 (OPT4) from Arabidopsis thaliana (Mouse-ear cress).